Reading from the N-terminus, the 282-residue chain is Trans,polycis-polyprenyl diphosphate synthase ((2Z,6E)-farnesyl diphosphate specific) (282 aa).

A disordered region spans residues 1 to 30 (MSPKTVFSTDTHREPIPPQPHPSGARPPQL). Asp-44 is a catalytic residue. Asp-44 is a binding site for Mg(2+). Substrate is bound by residues 45–48 (GNGR), Trp-49, Arg-57, His-61, and 89–91 (STE). Residue Asn-92 is the Proton acceptor of the active site. Residues Trp-93, Arg-95, Arg-212, and 218-220 (RLS) each bind substrate. Glu-231 provides a ligand contact to Mg(2+). The disordered stretch occupies residues 262 to 282 (GGAEPNPVGPPQSAAGAQGQD).

This sequence belongs to the UPP synthase family. As to quaternary structure, homodimer. Requires Mg(2+) as cofactor.

It catalyses the reaction (2Z,6E)-farnesyl diphosphate + 10 isopentenyl diphosphate = di-trans,deca-cis-tridecaprenyl diphosphate + 10 diphosphate. It carries out the reaction (2Z,6E)-farnesyl diphosphate + 11 isopentenyl diphosphate = di-trans,undeca-cis-tetradecaprenyl diphosphate + 11 diphosphate. The catalysed reaction is (2Z,6E)-farnesyl diphosphate + 9 isopentenyl diphosphate = di-trans,nona-cis-dodecaprenyl diphosphate + 9 diphosphate. In terms of biological role, catalyzes the synthesis of Z,E-mixed prenyl diphosphates by a condensation of isopentenyl diphosphate to an allylic diphosphate. It shows a large substrate specificity accepting dimethylallyl diphosphate (DMAPP), GPP, E,Efarnesyl diphosphate (FPP), E,E,E-geranylgeranyl diphosphate (GGPP), neryl diphosphate (Z-GPP), and (2Z,6E)-farnesyl diphosphate (Z,E-FPP) as allylic substrates. The enzyme exhibits the highest activity when Z,E-FPP is employed as an allylic substrate. The major product is dodecaprenyl diphosphate (C60) under every allylic substrate conditions, but the enzyme is also able to synthesize even C70 prenyl diphosphate as the maximum chain-length product. This chain is Trans,polycis-polyprenyl diphosphate synthase ((2Z,6E)-farnesyl diphosphate specific), found in Thermobifida fusca (strain YX).